Here is a 550-residue protein sequence, read N- to C-terminus: CTP synthase (550 aa).

Residues 1-277 (MNGSADAGPR…GRAVERALGL (277 aa)) are amidoligase domain. Serine 23 contacts CTP. Serine 23 is a UTP binding site. 24–29 (SLGKGI) is a binding site for ATP. Tyrosine 64 lines the L-glutamine pocket. Aspartate 81 provides a ligand contact to ATP. Aspartate 81 and glutamate 151 together coordinate Mg(2+). Residues 158 to 160 (DIE), 198 to 203 (KTKPTQ), and lysine 234 each bind CTP. Residues 198–203 (KTKPTQ) and lysine 234 each bind UTP. The Glutamine amidotransferase type-1 domain maps to 302–549 (KIAIAGKYVK…VEAALAYQER (248 aa)). L-glutamine is bound at residue glycine 364. The active-site Nucleophile; for glutamine hydrolysis is the cysteine 391. L-glutamine is bound by residues 392 to 395 (LGLQ), glutamate 415, and arginine 472. Active-site residues include histidine 522 and glutamate 524.

The protein belongs to the CTP synthase family. Homotetramer.

The catalysed reaction is UTP + L-glutamine + ATP + H2O = CTP + L-glutamate + ADP + phosphate + 2 H(+). The enzyme catalyses L-glutamine + H2O = L-glutamate + NH4(+). It carries out the reaction UTP + NH4(+) + ATP = CTP + ADP + phosphate + 2 H(+). Its pathway is pyrimidine metabolism; CTP biosynthesis via de novo pathway; CTP from UDP: step 2/2. Its activity is regulated as follows. Allosterically activated by GTP, when glutamine is the substrate; GTP has no effect on the reaction when ammonia is the substrate. The allosteric effector GTP functions by stabilizing the protein conformation that binds the tetrahedral intermediate(s) formed during glutamine hydrolysis. Inhibited by the product CTP, via allosteric rather than competitive inhibition. Functionally, catalyzes the ATP-dependent amination of UTP to CTP with either L-glutamine or ammonia as the source of nitrogen. Regulates intracellular CTP levels through interactions with the four ribonucleotide triphosphates. The sequence is that of CTP synthase from Thermus thermophilus (strain ATCC BAA-163 / DSM 7039 / HB27).